The primary structure comprises 206 residues: Protein GET1 (206 aa).

The Lumenal portion of the chain corresponds to 1 to 4; sequence MPSL. The helical transmembrane segment at 5 to 24 threads the bilayer; that stretch reads LITVLFLNVIIYVINTVGAA. Residues 25–110 lie on the Cytoplasmic side of the membrane; that stretch reads TVDGLLWLLY…TFDMTIKIAR (86 aa). Residues 75 to 100 are a coiled coil; that stretch reads AKLRRRHDKAMEAYEAKNNELTQSKS. Residues 111–131 form a helical membrane-spanning segment; that stretch reads WAATSGLMLFLQFWYSKTPIF. Residues 132 to 155 lie on the Lumenal side of the membrane; it reads TLPPGWIPWQVQWVLSFPRAPMGT. Residues 156-172 traverse the membrane as a helical segment; sequence VSIQIWGGACATVVALV. The Cytoplasmic segment spans residues 173 to 206; sequence GDAMRASLAYVSKPKIDRIKLGATMEGKEGKKRQ.

Belongs to the WRB/GET1 family. As to quaternary structure, interacts with GET3.

The protein resides in the endoplasmic reticulum membrane. Functionally, required for the post-translational delivery of tail-anchored (TA) proteins to the endoplasmic reticulum. Acts as a membrane receptor for soluble GET3, which recognizes and selectively binds the transmembrane domain of TA proteins in the cytosol. The sequence is that of Protein GET1 from Ajellomyces capsulatus (strain NAm1 / WU24) (Darling's disease fungus).